The sequence spans 182 residues: Large ribosomal subunit protein uL6 (182 aa).

The protein belongs to the universal ribosomal protein uL6 family. In terms of assembly, part of the 50S ribosomal subunit.

This protein binds to the 23S rRNA, and is important in its secondary structure. It is located near the subunit interface in the base of the L7/L12 stalk, and near the tRNA binding site of the peptidyltransferase center. This chain is Large ribosomal subunit protein uL6, found in Trichormus variabilis (strain ATCC 29413 / PCC 7937) (Anabaena variabilis).